Reading from the N-terminus, the 309-residue chain is Taste receptor type 2 member 31 (309 aa).

The Extracellular segment spans residues 1 to 2; the sequence is MT. Residues 3–23 form a helical membrane-spanning segment; the sequence is TFIPIIFSSLVMVMFVTGNFA. Residues 24–55 are Cytoplasmic-facing; the sequence is NGFIALVNSIESVKRQKISYADQILTALAVSR. A helical transmembrane segment spans residues 56–76; sequence IGLLWVLLLNWYSTVLNPAFY. At 77–100 the chain is on the extracellular side; that stretch reads SVEVRTTAYNVWAVTGHFSNWLAT. Residues 101–121 form a helical membrane-spanning segment; sequence SLSIFYLLKIANFSNLIFLHL. The Cytoplasmic portion of the chain corresponds to 122-126; it reads KRRVK. A helical membrane pass occupies residues 127 to 147; sequence SVILVMLLGPLLFLACQLFVI. Over 148–181 the chain is Extracellular; it reads NMKEIVQTKEYEGNXTWKIKLRSAVYLSDATVTT. Residue N161 is glycosylated (N-linked (GlcNAc...) asparagine). Residues 182 to 202 traverse the membrane as a helical segment; that stretch reads LGNLVPFTLTLLCFLLLICSL. Residues 203–229 are Cytoplasmic-facing; the sequence is CKHLKKMQLHGKGSQDPSMKVHIKALQ. Residues 230-250 form a helical membrane-spanning segment; sequence TVTSFLLLCAIYFLSIMISVW. At 251-259 the chain is on the extracellular side; that stretch reads SLGSLKNKP. The chain crosses the membrane as a helical span at residues 260–280; the sequence is VFMFCKAMRFSYPSIHPFILI. Residues 281 to 309 lie on the Cytoplasmic side of the membrane; that stretch reads WGNKKLKQTFLSVLQQVRYWVKGEKPSSP.

This sequence belongs to the G-protein coupled receptor T2R family.

It localises to the membrane. Functionally, receptor that may play a role in the perception of bitterness and is gustducin-linked. May play a role in sensing the chemical composition of the gastrointestinal content. The activity of this receptor may stimulate alpha gustducin, mediate PLC-beta-2 activation and lead to the gating of TRPM5. This is Taste receptor type 2 member 31 (TAS2R31) from Gorilla gorilla gorilla (Western lowland gorilla).